The primary structure comprises 414 residues: Argininosuccinate synthase (414 aa).

12–20 (AYSGGLDTS) serves as a coordination point for ATP. 2 residues coordinate L-citrulline: tyrosine 90 and serine 95. An ATP-binding site is contributed by glycine 120. Threonine 122, asparagine 126, and aspartate 127 together coordinate L-aspartate. Asparagine 126 lines the L-citrulline pocket. L-citrulline-binding residues include arginine 130, serine 179, serine 188, glutamate 264, and tyrosine 276.

The protein belongs to the argininosuccinate synthase family. Type 1 subfamily. Homotetramer.

It is found in the cytoplasm. The enzyme catalyses L-citrulline + L-aspartate + ATP = 2-(N(omega)-L-arginino)succinate + AMP + diphosphate + H(+). It participates in amino-acid biosynthesis; L-arginine biosynthesis; L-arginine from L-ornithine and carbamoyl phosphate: step 2/3. The polypeptide is Argininosuccinate synthase (Alkaliphilus metalliredigens (strain QYMF)).